The sequence spans 285 residues: MSKTVNAYAKINLALFITGKLPNGYHTLETIFAPINWYDRLTFEPSETIEMACTNAELPTDDSNLCIKAAKRLQTESGSQKGVKISLEKNVPFGAGLGGGSSDAAATLNALNELWELSLPSETLHKLATELGADVPYFLEMPALALGTGIGEELTDLQVAFPFSIVTVFPETAISTAWAYQNFKQNFDRLLPDAATEIQIVCETGDLGRMQQFENDFESIVYENYAEVKKLRDDFVEAGSGFTRLSGSGSAVFGVFADDEKATACYEAMRKRYPTSLTPKSFKMK.

Lys-10 is a catalytic residue. 92–102 (PFGAGLGGGSS) contributes to the ATP binding site. Asp-134 is a catalytic residue.

The protein belongs to the GHMP kinase family. IspE subfamily.

The enzyme catalyses 4-CDP-2-C-methyl-D-erythritol + ATP = 4-CDP-2-C-methyl-D-erythritol 2-phosphate + ADP + H(+). It participates in isoprenoid biosynthesis; isopentenyl diphosphate biosynthesis via DXP pathway; isopentenyl diphosphate from 1-deoxy-D-xylulose 5-phosphate: step 3/6. Functionally, catalyzes the phosphorylation of the position 2 hydroxy group of 4-diphosphocytidyl-2C-methyl-D-erythritol. In Chloroherpeton thalassium (strain ATCC 35110 / GB-78), this protein is 4-diphosphocytidyl-2-C-methyl-D-erythritol kinase.